The sequence spans 101 residues: Apolipoprotein C-II (101 aa).

Positions 1 to 22 (MGIRYLLVLVLVLLVLGCEVQG) are cleaved as a signal peptide. A lipid binding region spans residues 66 to 74 (TVDEKIREI). The tract at residues 78–101 (STAAVSTYAGIFTDQLLSMLKGDQ) is lipoprotein lipase cofactor.

Belongs to the apolipoprotein C2 family. In terms of processing, proapolipoprotein C-II is synthesized as a sialic acid containing glycoprotein which is subsequently desialylated prior to its proteolytic processing. Post-translationally, proapolipoprotein C-II, the major form found in plasma undergoes proteolytic cleavage of its N-terminal hexapeptide to generate apolipoprotein C-II, which occurs as the minor form in plasma.

The protein localises to the secreted. Functionally, component of chylomicrons, very low-density lipoproteins (VLDL), low-density lipoproteins (LDL), and high-density lipoproteins (HDL) in plasma. Plays an important role in lipoprotein metabolism as an activator of lipoprotein lipase. Both proapolipoprotein C-II and apolipoprotein C-II can activate lipoprotein lipase. This is Apolipoprotein C-II (APOC2) from Mirounga angustirostris (Northern elephant seal).